A 470-amino-acid polypeptide reads, in one-letter code: Nuclear receptor subfamily 0 group B member 1 (470 aa).

3 consecutive repeat copies span residues 1 to 67 (MAGE…YRCC), 68 to 133 (FCGK…YRCC), and 134 to 200 (FCGE…YRCC). The interval 1 to 253 (MAGENHQWQG…RPVALKNPQV (253 aa)) is 4 X 67 AA tandem repeats. 3 short sequence motifs (LXXLL motif) span residues 13 to 17 (LYNML), 80 to 84 (LYSML), and 146 to 150 (LYSLL). One copy of the 4; truncated repeat lies at 201–253 (FCGEDHPQQGSTLYCMPTSTNQAQAAPEERPRAPWWDASSGALRPVALKNPQV). The 255-residue stretch at 215-469 (CMPTSTNQAQ…DMMLEMLCTK (255 aa)) folds into the NR LBD domain. Residues 461–466 (MMLEML) carry the AF-2 motif motif.

Belongs to the nuclear hormone receptor family. NR0 subfamily. As to quaternary structure, homodimer. Interacts with NR5A1, NR5A2, NR0B2 and with COPS2. Interacts with ESRRB; represses ESRRB activity at the GATA6 promoter.

The protein resides in the nucleus. The protein localises to the cytoplasm. Functionally, nuclear receptor that lacks a DNA-binding domain and acts as a corepressor that inhibits the transcriptional activity of other nuclear receptors through heterodimeric interactions. Component of a cascade required for the development of the hypothalamic-pituitary-adrenal-gonadal axis. May also have a role in the development of the embryo and in the maintenance of embryonic stem cell pluripotency. This Pongo pygmaeus (Bornean orangutan) protein is Nuclear receptor subfamily 0 group B member 1 (NR0B1).